The primary structure comprises 108 residues: Insulin-1 (108 aa).

The first 24 residues, 1–24 (MALLVHFLPLLALLALWEPKPTQA), serve as a signal peptide directing secretion. 3 cysteine pairs are disulfide-bonded: Cys31/Cys94, Cys43/Cys107, and Cys93/Cys98. Positions 57–85 (EVEDPQVEQLELGGSPGDLQTLALEVARQ) are cleaved as a propeptide — c peptide.

Belongs to the insulin family. As to quaternary structure, heterodimer of a B chain and an A chain linked by two disulfide bonds.

The protein localises to the secreted. In terms of biological role, insulin decreases blood glucose concentration. It increases cell permeability to monosaccharides, amino acids and fatty acids. It accelerates glycolysis, the pentose phosphate cycle, and glycogen synthesis in liver. In Mus musculus (Mouse), this protein is Insulin-1 (Ins1).